The primary structure comprises 72 residues: Translation initiation factor IF-1 (72 aa).

The region spanning 1–72 (MAKEDVIEIE…TRGRITYRFK (72 aa)) is the S1-like domain.

Belongs to the IF-1 family. As to quaternary structure, component of the 30S ribosomal translation pre-initiation complex which assembles on the 30S ribosome in the order IF-2 and IF-3, IF-1 and N-formylmethionyl-tRNA(fMet); mRNA recruitment can occur at any time during PIC assembly.

Its subcellular location is the cytoplasm. In terms of biological role, one of the essential components for the initiation of protein synthesis. Stabilizes the binding of IF-2 and IF-3 on the 30S subunit to which N-formylmethionyl-tRNA(fMet) subsequently binds. Helps modulate mRNA selection, yielding the 30S pre-initiation complex (PIC). Upon addition of the 50S ribosomal subunit IF-1, IF-2 and IF-3 are released leaving the mature 70S translation initiation complex. The sequence is that of Translation initiation factor IF-1 from Streptococcus suis (strain 05ZYH33).